The primary structure comprises 379 residues: 2-nitroimidazole nitrohydrolase (379 aa).

The active-site Amidino-cysteine intermediate is the Cys-357.

Belongs to the arginine deiminase family.

It carries out the reaction 2-nitroimidazole + H2O = 1,3-dihydro-2H-imidazol-2-one + nitrite + H(+). In terms of biological role, involved in the biodegradation of 2-Nitroimidazole (2NI) which is a natural antibiotic and an analog of the synthetic nitroimidazoles used for treatment of tuberculosis, Chagas disease (also called American Trypanosomiasis) and cancer. Catalyzes the hydrolytic denitration of 2NI to produce imidazol-2-one and nitrite. It is also active against the 2NI synthetic derivative benznidazole. NnhA confers drug resistance to 2NI. The polypeptide is 2-nitroimidazole nitrohydrolase (nnhA) (Mycobacterium sp. (strain JS330)).